Reading from the N-terminus, the 91-residue chain is UPF0386 protein CC_0226 (91 aa).

It belongs to the UPF0386 family.

The chain is UPF0386 protein CC_0226 from Caulobacter vibrioides (strain ATCC 19089 / CIP 103742 / CB 15) (Caulobacter crescentus).